The sequence spans 675 residues: DNA ligase (675 aa).

NAD(+) is bound by residues 34–38 (DAEYD), 83–84 (SL), and Glu116. The active-site N6-AMP-lysine intermediate is the Lys118. Positions 139, 176, 293, and 317 each coordinate NAD(+). Cys411, Cys414, Cys429, and Cys435 together coordinate Zn(2+). The BRCT domain occupies 594-675 (AGENPFKGKT…FLAIVNAYKR (82 aa)).

Belongs to the NAD-dependent DNA ligase family. LigA subfamily. Requires Mg(2+) as cofactor. Mn(2+) is required as a cofactor.

It catalyses the reaction NAD(+) + (deoxyribonucleotide)n-3'-hydroxyl + 5'-phospho-(deoxyribonucleotide)m = (deoxyribonucleotide)n+m + AMP + beta-nicotinamide D-nucleotide.. Its function is as follows. DNA ligase that catalyzes the formation of phosphodiester linkages between 5'-phosphoryl and 3'-hydroxyl groups in double-stranded DNA using NAD as a coenzyme and as the energy source for the reaction. It is essential for DNA replication and repair of damaged DNA. The chain is DNA ligase from Mannheimia succiniciproducens (strain KCTC 0769BP / MBEL55E).